A 320-amino-acid chain; its full sequence is tRNA-cytidine(32) 2-sulfurtransferase (320 aa).

Residues 54 to 59 (SGGKDS) carry the PP-loop motif motif. Residues cysteine 129, cysteine 132, and cysteine 220 each contribute to the [4Fe-4S] cluster site.

This sequence belongs to the TtcA family. As to quaternary structure, homodimer. Requires Mg(2+) as cofactor. It depends on [4Fe-4S] cluster as a cofactor.

Its subcellular location is the cytoplasm. The catalysed reaction is cytidine(32) in tRNA + S-sulfanyl-L-cysteinyl-[cysteine desulfurase] + AH2 + ATP = 2-thiocytidine(32) in tRNA + L-cysteinyl-[cysteine desulfurase] + A + AMP + diphosphate + H(+). It functions in the pathway tRNA modification. Catalyzes the ATP-dependent 2-thiolation of cytidine in position 32 of tRNA, to form 2-thiocytidine (s(2)C32). The sulfur atoms are provided by the cysteine/cysteine desulfurase (IscS) system. This Bordetella parapertussis (strain 12822 / ATCC BAA-587 / NCTC 13253) protein is tRNA-cytidine(32) 2-sulfurtransferase.